Here is a 100-residue protein sequence, read N- to C-terminus: uncharacterized protein (100 aa).

Positions 8-100 (MKQSDDQIRA…TYLPGFLETL (93 aa)) constitute an HTH arsR-type domain. The H-T-H motif DNA-binding region spans 44-67 (CGEVGEKCNIVKTTASYHFKTLRE).

This is an uncharacterized protein from Bacillus subtilis (strain 168).